Reading from the N-terminus, the 466-residue chain is Serine/threonine-protein kinase SSN3 (466 aa).

A Protein kinase domain is found at 32–396 (YKILGFISSG…ARDALRHPWF (365 aa)). 38 to 46 (ISSGTYGRV) lines the ATP pocket. Positions 58–105 (ASAKSALPSSTRAALSLPKDKLPSPSFTEDSDPLNNPEMCMRPGDRPA) are disordered. Position 114 (Lys114) interacts with ATP. Asp216 acts as the Proton acceptor in catalysis. A disordered region spans residues 421 to 466 (THEDNGDAKMGSLPQSMAGGRLPSSSNFRPASGNIVQPAARKKARI).

Belongs to the protein kinase superfamily. CMGC Ser/Thr protein kinase family. CDC2/CDKX subfamily. Component of the SRB8-11 complex, a regulatory module of the Mediator complex. It depends on Mg(2+) as a cofactor.

It is found in the nucleus. The enzyme catalyses L-seryl-[protein] + ATP = O-phospho-L-seryl-[protein] + ADP + H(+). The catalysed reaction is L-threonyl-[protein] + ATP = O-phospho-L-threonyl-[protein] + ADP + H(+). It catalyses the reaction [DNA-directed RNA polymerase] + ATP = phospho-[DNA-directed RNA polymerase] + ADP + H(+). Functionally, component of the SRB8-11 complex. The SRB8-11 complex is a regulatory module of the Mediator complex which is itself involved in regulation of basal and activated RNA polymerase II-dependent transcription. The SRB8-11 complex may be involved in the transcriptional repression of a subset of genes regulated by Mediator. It may inhibit the association of the Mediator complex with RNA polymerase II to form the holoenzyme complex. The SRB8-11 complex phosphorylates the C-terminal domain (CTD) of the largest subunit of RNA polymerase II. This chain is Serine/threonine-protein kinase SSN3 (SSN3), found in Cryptococcus neoformans var. neoformans serotype D (strain B-3501A) (Filobasidiella neoformans).